Here is a 367-residue protein sequence, read N- to C-terminus: Phosphoribosylaminoimidazole-succinocarboxamide synthase (367 aa).

Belongs to the SAICAR synthetase family.

The catalysed reaction is 5-amino-1-(5-phospho-D-ribosyl)imidazole-4-carboxylate + L-aspartate + ATP = (2S)-2-[5-amino-1-(5-phospho-beta-D-ribosyl)imidazole-4-carboxamido]succinate + ADP + phosphate + 2 H(+). It participates in purine metabolism; IMP biosynthesis via de novo pathway; 5-amino-1-(5-phospho-D-ribosyl)imidazole-4-carboxamide from 5-amino-1-(5-phospho-D-ribosyl)imidazole-4-carboxylate: step 1/2. In Aliivibrio fischeri (strain ATCC 700601 / ES114) (Vibrio fischeri), this protein is Phosphoribosylaminoimidazole-succinocarboxamide synthase.